The sequence spans 400 residues: uncharacterized protein (400 aa).

The TR mART core domain maps to 161–380 (NDLLNIIDIV…YVVKVIVMRL (220 aa)).

This is an uncharacterized protein from Acanthamoeba polyphaga (Amoeba).